Here is a 341-residue protein sequence, read N- to C-terminus: DnaJ homolog subfamily C member 22 (341 aa).

A TM2 domain is found at 4–50 (GLLMTYALWAFGGPVGLHHLYLGRDSHALLWMLTLGGGGLGWLWEFW). The next 7 membrane-spanning stretches (helical) occupy residues 5 to 25 (LLMT…HLYL), 30 to 50 (HALL…WEFW), 81 to 101 (FASQ…SLSS), 105 to 125 (FYIV…AAVG), 135 to 155 (LGAA…ILPI), 185 to 205 (VGLA…YNTA), and 232 to 252 (VESV…APGF). The J domain occupies 277–341 (LAHQVLGIPE…QPKKPRASWR (65 aa)).

It is found in the membrane. May function as a co-chaperone. The chain is DnaJ homolog subfamily C member 22 (Dnajc22) from Rattus norvegicus (Rat).